Here is a 329-residue protein sequence, read N- to C-terminus: Nuclear pore complex protein NUP35 (329 aa).

2 disordered regions span residues 48–105 and 123–167; these read NFGG…GKGK and VSGS…PPRE. Residues 123-139 show a composition bias toward polar residues; the sequence is VSGSPSWWSQSKAGSST. Positions 183–264 constitute an RRM Nup35-type domain; that stretch reads LDEEEWVTVY…KPVDPIQKQA (82 aa). The segment at 271-315 is disordered; it reads NQGFMPLPPPSSTRNTARPLSRPQYLQNGSAFSPQPSGGAMASPS. Over residues 282–306 the composition is skewed to polar residues; the sequence is STRNTARPLSRPQYLQNGSAFSPQP.

It belongs to the Nup35 family. As to quaternary structure, part of the nuclear pore complex (NPC). The NPC has an eight-fold symmetrical structure comprising a central transport channel and two rings, the cytoplasmic and nuclear rings, to which eight filaments are attached. The cytoplasmic filaments have loose ends, while the nuclear filaments are joined in a distal ring, forming a nuclear basket. NPCs are highly dynamic in configuration and composition, and can be devided in 3 subcomplexes, the NUP62 subcomplex, the NUP107-160 subcomplex and the NUP93 subcomplex, containing approximately 30 different nucleoporin proteins.

Its subcellular location is the nucleus. It localises to the nuclear pore complex. This chain is Nuclear pore complex protein NUP35, found in Arabidopsis thaliana (Mouse-ear cress).